Here is a 356-residue protein sequence, read N- to C-terminus: GTPase Obg (356 aa).

In terms of domain architecture, Obg spans 1-159 (MKFLDQAKVY…RWIWLRLKLI (159 aa)). The OBG-type G domain occupies 160-328 (ADAGLVGLPN…ALYAIAQHLG (169 aa)). Residues 166–173 (GLPNAGKS), 191–195 (FTTLH), 213–216 (DIPG), 280–283 (NKID), and 309–311 (SGV) each bind GTP. Mg(2+) contacts are provided by S173 and T193. The interval 333–356 (DIPLPKPSNADEEDPDTDQPWSPV) is disordered.

The protein belongs to the TRAFAC class OBG-HflX-like GTPase superfamily. OBG GTPase family. In terms of assembly, monomer. Requires Mg(2+) as cofactor.

Its subcellular location is the cytoplasm. Functionally, an essential GTPase which binds GTP, GDP and possibly (p)ppGpp with moderate affinity, with high nucleotide exchange rates and a fairly low GTP hydrolysis rate. Plays a role in control of the cell cycle, stress response, ribosome biogenesis and in those bacteria that undergo differentiation, in morphogenesis control. The polypeptide is GTPase Obg (Hyphomonas neptunium (strain ATCC 15444)).